The chain runs to 570 residues: Formate--tetrahydrofolate ligase (570 aa).

Thr65–Thr72 serves as a coordination point for ATP.

This sequence belongs to the formate--tetrahydrofolate ligase family.

It catalyses the reaction (6S)-5,6,7,8-tetrahydrofolate + formate + ATP = (6R)-10-formyltetrahydrofolate + ADP + phosphate. It participates in one-carbon metabolism; tetrahydrofolate interconversion. The polypeptide is Formate--tetrahydrofolate ligase (Shewanella putrefaciens (strain CN-32 / ATCC BAA-453)).